A 729-amino-acid polypeptide reads, in one-letter code: 1,4-alpha-glucan branching enzyme GlgB 2 (729 aa).

Catalysis depends on Asp408, which acts as the Nucleophile. Glu461 acts as the Proton donor in catalysis.

Belongs to the glycosyl hydrolase 13 family. GlgB subfamily. As to quaternary structure, monomer.

It carries out the reaction Transfers a segment of a (1-&gt;4)-alpha-D-glucan chain to a primary hydroxy group in a similar glucan chain.. The protein operates within glycan biosynthesis; glycogen biosynthesis. In terms of biological role, catalyzes the formation of the alpha-1,6-glucosidic linkages in glycogen by scission of a 1,4-alpha-linked oligosaccharide from growing alpha-1,4-glucan chains and the subsequent attachment of the oligosaccharide to the alpha-1,6 position. The polypeptide is 1,4-alpha-glucan branching enzyme GlgB 2 (Xanthomonas campestris pv. campestris (strain 8004)).